Here is a 339-residue protein sequence, read N- to C-terminus: Anthranilate phosphoribosyltransferase (339 aa).

Residues G79, 82–83 (GD), S87, 89–92 (NIST), 107–115 (KHGNRSISS), and S119 each bind 5-phospho-alpha-D-ribose 1-diphosphate. Residue G79 participates in anthranilate binding. Position 91 (S91) interacts with Mg(2+). N110 provides a ligand contact to anthranilate. R165 contacts anthranilate. D224 and E225 together coordinate Mg(2+).

This sequence belongs to the anthranilate phosphoribosyltransferase family. Homodimer. Mg(2+) serves as cofactor.

The catalysed reaction is N-(5-phospho-beta-D-ribosyl)anthranilate + diphosphate = 5-phospho-alpha-D-ribose 1-diphosphate + anthranilate. The protein operates within amino-acid biosynthesis; L-tryptophan biosynthesis; L-tryptophan from chorismate: step 2/5. In terms of biological role, catalyzes the transfer of the phosphoribosyl group of 5-phosphorylribose-1-pyrophosphate (PRPP) to anthranilate to yield N-(5'-phosphoribosyl)-anthranilate (PRA). In Listeria innocua serovar 6a (strain ATCC BAA-680 / CLIP 11262), this protein is Anthranilate phosphoribosyltransferase.